A 521-amino-acid polypeptide reads, in one-letter code: FAD-dependent monooxygenase mdpD (521 aa).

Residues 1 to 48 (MTHFPVNIASDKQEFDPERWAKTPTTESSVNGENGTAPTSGLPSRHPS) form a disordered region. Positions 11 to 21 (DKQEFDPERWA) are enriched in basic and acidic residues. The span at 23–48 (TPTTESSVNGENGTAPTSGLPSRHPS) shows a compositional bias: polar residues. FAD-binding residues include Val-94 and Arg-160. Active-site residues include Arg-244 and Tyr-271. The FAD site is built by Asp-369 and Gly-382.

This sequence belongs to the paxM FAD-dependent monooxygenase family. Requires FAD as cofactor.

It participates in secondary metabolite biosynthesis. Its function is as follows. FAD-dependent monooxygenase; part of the gene cluster that mediates the biosynthesis of monodictyphenone, a prenyl xanthone derivative. The pathway begins with the synthesis of atrochrysone thioester by the polyketide synthase (PKS) mdpG. The atrochrysone carboxyl ACP thioesterase mdpF then breaks the thioester bond and releases the atrochrysone carboxylic acid from mdpG. The atrochrysone carboxylic acid is then converted to atrochrysone which is further transformed into emodin anthrone. The next step is performed by the anthrone oxygenase mdpH that catalyzes the oxidation of emodinanthrone to emodin. Emodin is further modified to yield monodictyphenone via several steps involving mdpB, mdpC mdpJ, mdpK and mdpL. These enzymes with xptA, xptB and xptC are also proposed to be involved in the synthesis of shamixanthone from emodin. Especially, direct reduction of emodin by the short chain dehydrogenase mdpC followed by dehydration catalyzed by the scytalone dehydratase-like protein mdpB gives loss of oxygen and formation of chrysophanol intermediate in two simple steps. This chain is FAD-dependent monooxygenase mdpD, found in Emericella nidulans (strain FGSC A4 / ATCC 38163 / CBS 112.46 / NRRL 194 / M139) (Aspergillus nidulans).